Here is a 396-residue protein sequence, read N- to C-terminus: Formate-dependent phosphoribosylglycinamide formyltransferase (396 aa).

N(1)-(5-phospho-beta-D-ribosyl)glycinamide contacts are provided by residues 24-25 (EL) and Glu84. ATP-binding positions include Arg116, Lys157, 162-167 (SSGKGQ), 197-200 (EGFV), and Glu205. An ATP-grasp domain is found at 121–310 (RLAAETLGIK…EFALHVRAIL (190 aa)). Positions 269 and 281 each coordinate Mg(2+). N(1)-(5-phospho-beta-D-ribosyl)glycinamide is bound by residues Asp288, Lys359, and 366–367 (RR).

This sequence belongs to the PurK/PurT family. Homodimer.

The enzyme catalyses N(1)-(5-phospho-beta-D-ribosyl)glycinamide + formate + ATP = N(2)-formyl-N(1)-(5-phospho-beta-D-ribosyl)glycinamide + ADP + phosphate + H(+). Its pathway is purine metabolism; IMP biosynthesis via de novo pathway; N(2)-formyl-N(1)-(5-phospho-D-ribosyl)glycinamide from N(1)-(5-phospho-D-ribosyl)glycinamide (formate route): step 1/1. Functionally, involved in the de novo purine biosynthesis. Catalyzes the transfer of formate to 5-phospho-ribosyl-glycinamide (GAR), producing 5-phospho-ribosyl-N-formylglycinamide (FGAR). Formate is provided by PurU via hydrolysis of 10-formyl-tetrahydrofolate. This chain is Formate-dependent phosphoribosylglycinamide formyltransferase, found in Psychromonas ingrahamii (strain DSM 17664 / CCUG 51855 / 37).